The primary structure comprises 185 residues: NAD(P)H-quinone oxidoreductase subunit J (185 aa).

Belongs to the complex I 30 kDa subunit family. In terms of assembly, NDH-1 can be composed of about 15 different subunits; different subcomplexes with different compositions have been identified which probably have different functions.

It localises to the cellular thylakoid membrane. The catalysed reaction is a plastoquinone + NADH + (n+1) H(+)(in) = a plastoquinol + NAD(+) + n H(+)(out). The enzyme catalyses a plastoquinone + NADPH + (n+1) H(+)(in) = a plastoquinol + NADP(+) + n H(+)(out). Functionally, NDH-1 shuttles electrons from an unknown electron donor, via FMN and iron-sulfur (Fe-S) centers, to quinones in the respiratory and/or the photosynthetic chain. The immediate electron acceptor for the enzyme in this species is believed to be plastoquinone. Couples the redox reaction to proton translocation, and thus conserves the redox energy in a proton gradient. Cyanobacterial NDH-1 also plays a role in inorganic carbon-concentration. This is NAD(P)H-quinone oxidoreductase subunit J from Prochlorococcus marinus (strain MIT 9303).